Consider the following 107-residue polypeptide: U1-lycotoxin-Ls1l (107 aa).

An N-terminal signal peptide occupies residues 1-20 (MMKVLVVVALLVTLISYSSS). Positions 21–41 (EGIDDLEADELLSLMANEQTR) are excised as a propeptide. 4 cysteine pairs are disulfide-bonded: cysteine 44-cysteine 59, cysteine 51-cysteine 68, cysteine 58-cysteine 86, and cysteine 70-cysteine 84.

The protein belongs to the neurotoxin 19 (CSTX) family. 04 (U1-Lctx) subfamily. In terms of tissue distribution, expressed by the venom gland.

It is found in the secreted. This chain is U1-lycotoxin-Ls1l, found in Lycosa singoriensis (Wolf spider).